Reading from the N-terminus, the 746-residue chain is Steroid receptor seven-up, isoform A (746 aa).

The disordered stretch occupies residues 38 to 191 (PPHSAWHEPP…HSQSSNSGSQ (154 aa)). Residues 56-68 (AASAGPGTTTGSV) show a composition bias toward low complexity. Residues 83-101 (QQSAVIKQDLSCPSLNQAG) are compositionally biased toward polar residues. Positions 122 to 141 (GSAGGHHSGSGSGSGSGVNP) are enriched in gly residues. The segment covering 158 to 170 (MLTSIKGQPTGCG) has biased composition (polar residues). The span at 171 to 191 (STTPSSQANSSHSQSSNSGSQ) shows a compositional bias: low complexity. Positions 197 to 272 (NIECVVCGDK…MGMRREAVQR (76 aa)) form a DNA-binding region, nuclear receptor. 2 NR C4-type zinc fingers span residues 200–220 (CVVC…CEGC) and 236–260 (CRGS…LKKC). Residues 307-556 (YLSSYISLLL…PLVPSAGSAF (250 aa)) form the NR LBD domain. The tract at residues 579–645 (QATPPSSGGG…APAPVPTSSV (67 aa)) is disordered. Positions 592–605 (GHNNSSGLGASLPT) are enriched in polar residues. Positions 606-645 (QSQSGSSSRNLTASPLSTSLATAPAPASASAPAPVPTSSV) are enriched in low complexity.

Belongs to the nuclear hormone receptor family. NR2 subfamily. As to expression, expressed in several embryonic tissues; dorsal vessel, oenocyte and fat body. CNS expression is dynamic and confined to temporally restricted subsections of the NB lineage; expressed in many NB and GMCs, but only a small number of neurons.

It localises to the nucleus. Its function is as follows. Receptor that is required in photoreceptors R1, R3, R4 and R6 during eye development; generation of the ganglion mother cell-2 (GMC-2) fate in the nb7-3 lineage, coinciding with the transition in the expression of HB to KR in the neuroblasts (NBs). The protein is Steroid receptor seven-up, isoform A (svp) of Drosophila melanogaster (Fruit fly).